The sequence spans 64 residues: MPKQKSHSGASKRFRVTGSGKVLRQRANRRHYLEHKTSRLTRRLDGVVPLTKADNRRVKRLLAR.

A compositionally biased stretch (basic residues) spans 1–15 (MPKQKSHSGASKRFR). The interval 1–22 (MPKQKSHSGASKRFRVTGSGKV) is disordered.

It belongs to the bacterial ribosomal protein bL35 family.

The polypeptide is Large ribosomal subunit protein bL35 (Frankia casuarinae (strain DSM 45818 / CECT 9043 / HFP020203 / CcI3)).